We begin with the raw amino-acid sequence, 387 residues long: Alpha-sarcoglycan (387 aa).

The first 24 residues, 1 to 24, serve as a signal peptide directing secretion; the sequence is MAAAALLWLPLLVGCLAGPGGTEA. Topologically, residues 25-290 are extracellular; the sequence is QQTTLYPLVG…ATARDFLADA (266 aa). N-linked (GlcNAc...) asparagine glycosylation is found at asparagine 174 and asparagine 246. The chain crosses the membrane as a helical span at residues 291–311; the sequence is LVTLLVPLLVALLLALLLAYI. Over 312–387 the chain is Cytoplasmic; it reads MCCRREGRLK…AQVPLILDQH (76 aa). Serine 377 is modified (phosphoserine).

Belongs to the sarcoglycan alpha/epsilon family. Cross-link to form 2 major subcomplexes: one consisting of SGCB, SGCD and SGCG and the other consisting of SGCB and SGCD. The association between SGCB and SGCG is particularly strong while SGCA is loosely associated with the other sarcoglycans. Interacts with the syntrophin SNTA1.

The protein resides in the cell membrane. It is found in the sarcolemma. It localises to the cytoplasm. The protein localises to the cytoskeleton. Component of the sarcoglycan complex, a subcomplex of the dystrophin-glycoprotein complex which forms a link between the F-actin cytoskeleton and the extracellular matrix. This chain is Alpha-sarcoglycan (SGCA), found in Oryctolagus cuniculus (Rabbit).